A 284-amino-acid chain; its full sequence is NH(3)-dependent NAD(+) synthetase (284 aa).

ATP is bound at residue 51-58 (GISGGIDS). Position 57 (Asp57) interacts with Mg(2+). Residue Arg148 participates in deamido-NAD(+) binding. Thr168 provides a ligand contact to ATP. Glu173 serves as a coordination point for Mg(2+). Deamido-NAD(+)-binding residues include Lys181 and Asp188. Lys197 and Thr219 together coordinate ATP. A deamido-NAD(+)-binding site is contributed by 268–269 (HK).

This sequence belongs to the NAD synthetase family. In terms of assembly, homodimer.

The catalysed reaction is deamido-NAD(+) + NH4(+) + ATP = AMP + diphosphate + NAD(+) + H(+). It functions in the pathway cofactor biosynthesis; NAD(+) biosynthesis; NAD(+) from deamido-NAD(+) (ammonia route): step 1/1. Its function is as follows. Catalyzes the ATP-dependent amidation of deamido-NAD to form NAD. Uses ammonia as a nitrogen source. The sequence is that of NH(3)-dependent NAD(+) synthetase from Burkholderia mallei (strain NCTC 10247).